We begin with the raw amino-acid sequence, 468 residues long: MPMSPDPRPGRDGASTKPTVAFAHLGCEKNRVDTEHMLGLLSEAGYGVSSDESVANVVVVNTCSFIQEAREESVRTLVGLAEQGKELIIAGCLAQHFQEELLESLPEAKAIVGTGDYQHIVEVLERVEAGERVNRVSSTPTFVADERLPRHRTTGEAVAYLKVAEGCDYRCAFCIIPHLRGNQRSRPIESIVAEAHQLAAEGVKELILISQITTNYGLDLYGRPRLADLLQALGDVEIPWIRVHYAYPTGLTNEVISAYRDVPNVLPYLDLPLQHSHPDVLRAMNRPWQADVNERLLDQIRSQLPEAVLRTTLIVGFPGETQEQFEHLAGFLERQQFDHVGVFTFSPEQGTAAAELPNPVDADIALARKDRLMTLQQPISAAANARWVGRTVDALIEQHNPETGAMIGRCARFAPEVDGEVHIAPRADGLQAAPGTMIPVQITGSDIYDLRAEIVGAASMVASARSAL.

Positions 18-129 (PTVAFAHLGC…IVEVLERVEA (112 aa)) constitute an MTTase N-terminal domain. [4Fe-4S] cluster contacts are provided by Cys-27, Cys-63, Cys-92, Cys-167, Cys-171, and Cys-174. Residues 153–382 (TTGEAVAYLK…MTLQQPISAA (230 aa)) enclose the Radical SAM core domain. Residues 385–456 (ARWVGRTVDA…IYDLRAEIVG (72 aa)) form the TRAM domain.

It belongs to the methylthiotransferase family. RimO subfamily. Requires [4Fe-4S] cluster as cofactor.

It is found in the cytoplasm. It carries out the reaction L-aspartate(89)-[ribosomal protein uS12]-hydrogen + (sulfur carrier)-SH + AH2 + 2 S-adenosyl-L-methionine = 3-methylsulfanyl-L-aspartate(89)-[ribosomal protein uS12]-hydrogen + (sulfur carrier)-H + 5'-deoxyadenosine + L-methionine + A + S-adenosyl-L-homocysteine + 2 H(+). Its function is as follows. Catalyzes the methylthiolation of an aspartic acid residue of ribosomal protein uS12. This is Ribosomal protein uS12 methylthiotransferase RimO from Synechococcus sp. (strain WH7803).